A 184-amino-acid polypeptide reads, in one-letter code: ATP synthase subunit delta (184 aa).

It belongs to the ATPase delta chain family. F-type ATPases have 2 components, F(1) - the catalytic core - and F(0) - the membrane proton channel. F(1) has five subunits: alpha(3), beta(3), gamma(1), delta(1), epsilon(1). F(0) has three main subunits: a(1), b(2) and c(10-14). The alpha and beta chains form an alternating ring which encloses part of the gamma chain. F(1) is attached to F(0) by a central stalk formed by the gamma and epsilon chains, while a peripheral stalk is formed by the delta and b chains.

The protein localises to the cell inner membrane. Its function is as follows. F(1)F(0) ATP synthase produces ATP from ADP in the presence of a proton or sodium gradient. F-type ATPases consist of two structural domains, F(1) containing the extramembraneous catalytic core and F(0) containing the membrane proton channel, linked together by a central stalk and a peripheral stalk. During catalysis, ATP synthesis in the catalytic domain of F(1) is coupled via a rotary mechanism of the central stalk subunits to proton translocation. In terms of biological role, this protein is part of the stalk that links CF(0) to CF(1). It either transmits conformational changes from CF(0) to CF(1) or is implicated in proton conduction. The chain is ATP synthase subunit delta from Rickettsia canadensis (strain McKiel).